The chain runs to 221 residues: MGKHYCDYCDVFLTHDSVSVRKAHNSGRNHLQNVREYYQTLEPECIQQVLDTLAQEYDLRGIEKPRDLLQPAGSSFMTFGAGPLSGSSDRAFRSQVPPSRMSMGGGVGGGSDRRGDSRGGSGGYGRYGNNDGSRDQGAPPNYSRPPPQGGPYSRPPPDMMAGGPPGISNGPYPPRGPPLGYGAPLPGAYPSGPPPNMRGPPPPLASNGSHAPHSRTGYGPR.

The segment at 4-36 adopts a Matrin-type zinc-finger fold; that stretch reads HYCDYCDVFLTHDSVSVRKAHNSGRNHLQNVRE. The interval 80 to 221 is disordered; the sequence is GAGPLSGSSD…PHSRTGYGPR (142 aa). Residues 142 to 158 are compositionally biased toward pro residues; that stretch reads YSRPPPQGGPYSRPPPD. A compositionally biased stretch (low complexity) spans 178 to 190; sequence PLGYGAPLPGAYP. The segment covering 191 to 204 has biased composition (pro residues); it reads SGPPPNMRGPPPPL.

The protein belongs to the U1 small nuclear ribonucleoprotein C family. In terms of assembly, U1 snRNP is composed of the 7 core Sm proteins B/B', D1, D2, D3, E, F and G that assemble in a heptameric protein ring on the Sm site of the small nuclear RNA to form the core snRNP, and at least 3 U1 snRNP-specific proteins U1-70K, U1-A and U1-C. U1-C interacts with U1 snRNA and the 5' splice-site region of the pre-mRNA.

The protein localises to the nucleus. Functionally, component of the spliceosomal U1 snRNP, which is essential for recognition of the pre-mRNA 5' splice-site and the subsequent assembly of the spliceosome. U1-C is directly involved in initial 5' splice-site recognition for both constitutive and regulated alternative splicing. The interaction with the 5' splice-site seems to precede base-pairing between the pre-mRNA and the U1 snRNA. Stimulates commitment or early (E) complex formation by stabilizing the base pairing of the 5' end of the U1 snRNA and the 5' splice-site region. The protein is U1 small nuclear ribonucleoprotein C of Mycosarcoma maydis (Corn smut fungus).